The sequence spans 327 residues: Delta(6)-protoilludene synthase HYPSUDRAFT_138665 (327 aa).

Residues Asp-79, Asn-215, Ser-219, and Glu-223 each coordinate Mg(2+). Positions 79-83 match the DDXXD motif motif; it reads DEHTD. Positions 304 and 305 each coordinate (2E,6E)-farnesyl diphosphate.

This sequence belongs to the terpene synthase family. The cofactor is Mg(2+).

The catalysed reaction is (2E,6E)-farnesyl diphosphate = Delta(6)-protoilludene + diphosphate. Functionally, terpene cyclase that catalyzes the cyclization of farnesyl diphosphate (FPP) to delta(6)-protoilludene. The polypeptide is Delta(6)-protoilludene synthase HYPSUDRAFT_138665 (Hypholoma sublateritium (strain FD-334 SS-4)).